A 337-amino-acid polypeptide reads, in one-letter code: Cytidine deaminase 2 (337 aa).

CMP/dCMP-type deaminase domains lie at 43 to 164 (TDPI…FSSL) and 199 to 320 (LDCS…LKYL). 84-86 (NVD) lines the substrate pocket. Histidine 97 is a binding site for Zn(2+). Residue glutamate 99 is the Proton donor of the active site. 2 residues coordinate Zn(2+): cysteine 132 and cysteine 135.

The protein belongs to the cytidine and deoxycytidylate deaminase family. In terms of assembly, homodimer. Zn(2+) serves as cofactor.

It catalyses the reaction cytidine + H2O + H(+) = uridine + NH4(+). The enzyme catalyses 2'-deoxycytidine + H2O + H(+) = 2'-deoxyuridine + NH4(+). In terms of biological role, this enzyme scavenges exogenous and endogenous cytidine and 2'-deoxycytidine for UMP synthesis. The protein is Cytidine deaminase 2 (CDA2) of Arabidopsis thaliana (Mouse-ear cress).